Here is a 539-residue protein sequence, read N- to C-terminus: Diacylglycerol O-acyltransferase 1 (539 aa).

Residues 1–104 (MAISDMPEST…NDGGEKIANG (104 aa)) are disordered. Positions 33-52 (TETTEVSDSNSKTTDPDSGN) are enriched in polar residues. Over residues 56 to 80 (ESVRVRDSSTDESLARKSCEDDGSR) the composition is skewed to basic and acidic residues. Transmembrane regions (helical) follow at residues 143–163 (HAGLFNLCIVVLVAVNSRLII), 187–207 (WPLLMCCLTLPIFPAAAFVVE), 219–239 (VVLLLHFIITTAALLYPVFVI), 244–264 (SVVLSGVTLMLFACIVWLKLV), 294–314 (YPYSVSFKSLAYFMVAPTLCY), 334–354 (VKLIIFTGVMGFIIEQYINPI), and 383–403 (VWLCMFYCFFHLWLNILAELL). Positions 410-416 (FYKDWWN) match the FYXDWWN motif motif. 3 consecutive transmembrane segments (helical) span residues 451–471 (GVAILIAFFVSAIFHELCIAV), 473–493 (CHIFKLWAFIGIMCQVPLVLI), and 506–526 (VGNMIFWFFFCILGQPMCVLL). The active site involves His-465.

The protein belongs to the membrane-bound acyltransferase family. Sterol o-acyltransferase subfamily.

It localises to the endoplasmic reticulum membrane. It catalyses the reaction an acyl-CoA + a 1,2-diacyl-sn-glycerol = a triacyl-sn-glycerol + CoA. Its pathway is glycerolipid metabolism; triacylglycerol biosynthesis. Major contributor to triacylglycerol (TAG) synthesis and oil accumulation in developing seeds. Catalyzes the acylation of the sn-3 hydroxy group of sn-1,2-diacylglycerol using acyl-CoA. Has a marked preference for oleoyl-CoA as substrate. The sequence is that of Diacylglycerol O-acyltransferase 1 from Corylus americana (American hazelnut).